We begin with the raw amino-acid sequence, 61 residues long: Large ribosomal subunit protein bL28 (61 aa).

The protein belongs to the bacterial ribosomal protein bL28 family.

The protein is Large ribosomal subunit protein bL28 of Geobacillus kaustophilus (strain HTA426).